We begin with the raw amino-acid sequence, 278 residues long: MGIRKYKPTTPGRRGSSVADFVEVTRSTPEKSLVRPLHSKGGRNNAGRVTVRHQGGGHKRAYRVIDFRRHDKDGVPAKVAHIEYDPNRTARIALLHYADGEKRYILAPRNLQQGDRVENGPGADIKPGNNLALRNIPVGTTVHAIELRPGGGAKFARSAGASVQLLAREGAMATLRMPSGEIRMVDARCRATVGEVGNAEQSNINWGKAGRKRWLGVRPTVRGVAMNPVDHPHGGGEGKTSGGRHPVSPWGQKEGRTRSPKKASSKYIVRRRKTNKKR.

2 disordered regions span residues S27 to G57 and V224 to R278. Positions R258 to R278 are enriched in basic residues.

It belongs to the universal ribosomal protein uL2 family. In terms of assembly, part of the 50S ribosomal subunit. Forms a bridge to the 30S subunit in the 70S ribosome.

Functionally, one of the primary rRNA binding proteins. Required for association of the 30S and 50S subunits to form the 70S ribosome, for tRNA binding and peptide bond formation. It has been suggested to have peptidyltransferase activity; this is somewhat controversial. Makes several contacts with the 16S rRNA in the 70S ribosome. This chain is Large ribosomal subunit protein uL2, found in Streptomyces avermitilis (strain ATCC 31267 / DSM 46492 / JCM 5070 / NBRC 14893 / NCIMB 12804 / NRRL 8165 / MA-4680).